Here is a 339-residue protein sequence, read N- to C-terminus: Heat-inducible transcription repressor HrcA (339 aa).

This sequence belongs to the HrcA family.

In terms of biological role, negative regulator of class I heat shock genes (grpE-dnaK-dnaJ and groELS operons). Prevents heat-shock induction of these operons. The chain is Heat-inducible transcription repressor HrcA from Paraburkholderia phytofirmans (strain DSM 17436 / LMG 22146 / PsJN) (Burkholderia phytofirmans).